We begin with the raw amino-acid sequence, 493 residues long: Anthranilate synthase component 1 (493 aa).

Residues Ser-48 and Pro-273–Met-275 contribute to the L-tryptophan site. Position 308–309 (Gly-308–Thr-309) interacts with chorismate. Glu-335 contributes to the Mg(2+) binding site. Chorismate contacts are provided by residues Tyr-423, Arg-443, Gly-457–Gly-459, and Gly-459. Glu-472 contacts Mg(2+).

The protein belongs to the anthranilate synthase component I family. In terms of assembly, heterotetramer consisting of two non-identical subunits: a beta subunit (TrpG) and a large alpha subunit (TrpE). Mg(2+) serves as cofactor.

The catalysed reaction is chorismate + L-glutamine = anthranilate + pyruvate + L-glutamate + H(+). It functions in the pathway amino-acid biosynthesis; L-tryptophan biosynthesis; L-tryptophan from chorismate: step 1/5. With respect to regulation, feedback inhibited by tryptophan. In terms of biological role, part of a heterotetrameric complex that catalyzes the two-step biosynthesis of anthranilate, an intermediate in the biosynthesis of L-tryptophan. In the first step, the glutamine-binding beta subunit (TrpG) of anthranilate synthase (AS) provides the glutamine amidotransferase activity which generates ammonia as a substrate that, along with chorismate, is used in the second step, catalyzed by the large alpha subunit of AS (TrpE) to produce anthranilate. In the absence of TrpG, TrpE can synthesize anthranilate directly from chorismate and high concentrations of ammonia. This is Anthranilate synthase component 1 (trpE) from Pseudomonas putida (Arthrobacter siderocapsulatus).